We begin with the raw amino-acid sequence, 26 residues long: Histone H2B.1, sperm (26 aa).

The segment at 1–26 (MPSQKSPTKRSPTKRSPQKGGKGAKR) is disordered. Short sequence motifs (SPKK motif) lie at residues 6–9 (SPTK), 11–14 (SPTK), and 16–19 (SPQK). Residues 7–26 (PTKRSPTKRSPQKGGKGAKR) are compositionally biased toward basic residues. A phosphoserine mark is found at Ser11 and Ser16.

The protein belongs to the histone H2B family. In terms of assembly, the nucleosome is a histone octamer containing two molecules each of H2A, H2B, H3 and H4 assembled in one H3-H4 heterotetramer and two H2A-H2B heterodimers. The octamer wraps approximately 147 bp of DNA. Post-translationally, monoubiquitination gives a specific tag for epigenetic transcriptional activation and is also prerequisite for histone H3 'Lys-4' and 'Lys-79' methylation. Phosphorylated on SPKK motifs 2 and 3; which may regulate DNA binding. Dephosphorylated during maturation of spermatids to mature sperm and rephosphorylated at fertilization.

It localises to the nucleus. Its subcellular location is the chromosome. Its function is as follows. Core component of nucleosome. Nucleosomes wrap and compact DNA into chromatin, limiting DNA accessibility to the cellular machineries which require DNA as a template. Histones thereby play a central role in transcription regulation, DNA repair, DNA replication and chromosomal stability. DNA accessibility is regulated via a complex set of post-translational modifications of histones, also called histone code, and nucleosome remodeling. The chain is Histone H2B.1, sperm from Echinus esculentus (Sea urchin).